Reading from the N-terminus, the 485-residue chain is Rhamnulokinase (485 aa).

Position 12–16 (12–16 (ATSGR)) interacts with ATP. Substrate contacts are provided by residues glycine 80 and 238–240 (HDT). The Proton acceptor role is filled by aspartate 239. Residue threonine 261 coordinates ATP. Asparagine 298 contributes to the substrate binding site. Glutamate 306 contributes to the ATP binding site. Cysteine 355 and cysteine 372 are oxidised to a cystine. Glycine 404 contacts ATP.

The protein belongs to the rhamnulokinase family. Mg(2+) serves as cofactor.

The catalysed reaction is L-rhamnulose + ATP = L-rhamnulose 1-phosphate + ADP + H(+). The protein operates within carbohydrate degradation; L-rhamnose degradation; glycerone phosphate from L-rhamnose: step 2/3. Its function is as follows. Involved in the catabolism of L-rhamnose (6-deoxy-L-mannose). Catalyzes the transfer of the gamma-phosphate group from ATP to the 1-hydroxyl group of L-rhamnulose to yield L-rhamnulose 1-phosphate. This Bacteroides thetaiotaomicron (strain ATCC 29148 / DSM 2079 / JCM 5827 / CCUG 10774 / NCTC 10582 / VPI-5482 / E50) protein is Rhamnulokinase.